The chain runs to 415 residues: Adenylosuccinate synthetase (415 aa).

Residues 12-18 (GDEGKGK) and 40-42 (GHT) each bind GTP. Asp13 serves as the catalytic Proton acceptor. Positions 13 and 40 each coordinate Mg(2+). IMP is bound by residues 13–16 (DEGK), 38–41 (NAGH), Thr125, Arg139, Gln219, Thr234, and Arg298. His41 acts as the Proton donor in catalysis. Residue 294–300 (TTTGRPR) coordinates substrate. Residues Arg300, 326-328 (KLD), and 404-406 (STG) each bind GTP.

It belongs to the adenylosuccinate synthetase family. Homodimer. The cofactor is Mg(2+).

Its subcellular location is the cytoplasm. It catalyses the reaction IMP + L-aspartate + GTP = N(6)-(1,2-dicarboxyethyl)-AMP + GDP + phosphate + 2 H(+). It functions in the pathway purine metabolism; AMP biosynthesis via de novo pathway; AMP from IMP: step 1/2. In terms of biological role, plays an important role in the de novo pathway of purine nucleotide biosynthesis. Catalyzes the first committed step in the biosynthesis of AMP from IMP. The protein is Adenylosuccinate synthetase of Wolinella succinogenes (strain ATCC 29543 / DSM 1740 / CCUG 13145 / JCM 31913 / LMG 7466 / NCTC 11488 / FDC 602W) (Vibrio succinogenes).